The primary structure comprises 1128 residues: GTPase-activating protein BEM3 (1128 aa).

The tract at residues 194–241 (SSPTKIHSEQLASPAASVTYTTSRITIKSPNKGSKSPLQERLRSPQNP) is disordered. Residues 209–230 (ASVTYTTSRITIKSPNKGSKSP) are compositionally biased toward polar residues. Phosphoserine is present on Ser-254. Disordered regions lie at residues 345–391 (EDLV…TPLS) and 418–486 (PVLT…RPHA). The segment covering 366–375 (LPPPPAPPTF) has biased composition (pro residues). 2 stretches are compositionally biased toward polar residues: residues 382–391 (GNIKNSTPLS) and 420–478 (LTSS…QGSL). The PH domain occupies 634–741 (DNVKDGSLLL…WLSAFSDYID (108 aa)). 2 disordered regions span residues 746 to 777 (LSLS…NATI) and 796 to 838 (NNNI…DSRR). A compositionally biased stretch (polar residues) spans 752-764 (RNANDTDSASHLS). Low complexity predominate over residues 796 to 815 (NNNISNSSNNIANSDGIDSN). Over residues 816–829 (PSSHSNFLASSSGN) the composition is skewed to polar residues. Residues 913 to 1128 (LRLSSHKYQN…EKVDIHIPQV (216 aa)) form the Rho-GAP domain.

The protein resides in the cytoplasm. Its function is as follows. GTPase-activating protein (GAP) for CDC42 and less efficiently for RHO1. Negative regulator of the pheromone-response pathway through the STE20 protein kinase. The sequence is that of GTPase-activating protein BEM3 (BEM3) from Saccharomyces cerevisiae (strain ATCC 204508 / S288c) (Baker's yeast).